A 160-amino-acid polypeptide reads, in one-letter code: Protein-export protein SecB (160 aa).

The protein belongs to the SecB family. In terms of assembly, homotetramer, a dimer of dimers. One homotetramer interacts with 1 SecA dimer.

It localises to the cytoplasm. In terms of biological role, one of the proteins required for the normal export of preproteins out of the cell cytoplasm. It is a molecular chaperone that binds to a subset of precursor proteins, maintaining them in a translocation-competent state. It also specifically binds to its receptor SecA. The protein is Protein-export protein SecB of Aliivibrio salmonicida (strain LFI1238) (Vibrio salmonicida (strain LFI1238)).